Consider the following 268-residue polypeptide: N-formylmaleamate deformylase (268 aa).

Residues 28–251 (ALILVPGITS…NAGHMIPWDD (224 aa)) enclose the AB hydrolase-1 domain. Residues serine 101, glutamate 221, and histidine 245 each act as charge relay system in the active site.

It carries out the reaction N-formylmaleamate + H2O = maleamate + formate + H(+). The protein operates within cofactor degradation; nicotinate degradation. In terms of biological role, deformylase that catalyzes the conversion of N-formylmaleamic acid to maleamate in the aerobic nicotinate degradation pathway. The polypeptide is N-formylmaleamate deformylase (nicD) (Pseudomonas putida (strain ATCC 47054 / DSM 6125 / CFBP 8728 / NCIMB 11950 / KT2440)).